The primary structure comprises 326 residues: Beta-ketoacyl-[acyl-carrier-protein] synthase III (326 aa).

Catalysis depends on residues Cys-120 and His-253. The ACP-binding stretch occupies residues 254 to 258 (QANIR). The active site involves Asn-283.

It belongs to the thiolase-like superfamily. FabH family. In terms of assembly, homodimer.

The protein localises to the cytoplasm. It carries out the reaction malonyl-[ACP] + acetyl-CoA + H(+) = 3-oxobutanoyl-[ACP] + CO2 + CoA. It functions in the pathway lipid metabolism; fatty acid biosynthesis. Catalyzes the condensation reaction of fatty acid synthesis by the addition to an acyl acceptor of two carbons from malonyl-ACP. Catalyzes the first condensation reaction which initiates fatty acid synthesis and may therefore play a role in governing the total rate of fatty acid production. Possesses both acetoacetyl-ACP synthase and acetyl transacylase activities. Its substrate specificity determines the biosynthesis of branched-chain and/or straight-chain of fatty acids. In Ralstonia nicotianae (strain ATCC BAA-1114 / GMI1000) (Ralstonia solanacearum), this protein is Beta-ketoacyl-[acyl-carrier-protein] synthase III.